The following is a 206-amino-acid chain: Small ribosomal subunit protein uS4 (206 aa).

In terms of domain architecture, S4 RNA-binding spans R96–D157.

It belongs to the universal ribosomal protein uS4 family. Part of the 30S ribosomal subunit. Contacts protein S5. The interaction surface between S4 and S5 is involved in control of translational fidelity.

Functionally, one of the primary rRNA binding proteins, it binds directly to 16S rRNA where it nucleates assembly of the body of the 30S subunit. In terms of biological role, with S5 and S12 plays an important role in translational accuracy. The polypeptide is Small ribosomal subunit protein uS4 (Thioalkalivibrio sulfidiphilus (strain HL-EbGR7)).